Consider the following 151-residue polypeptide: Flagellar assembly factor FliW (151 aa).

This sequence belongs to the FliW family. Interacts with translational regulator CsrA and flagellin(s).

Its subcellular location is the cytoplasm. Its function is as follows. Acts as an anti-CsrA protein, binds CsrA and prevents it from repressing translation of its target genes, one of which is flagellin. Binds to flagellin and participates in the assembly of the flagellum. In Halalkalibacterium halodurans (strain ATCC BAA-125 / DSM 18197 / FERM 7344 / JCM 9153 / C-125) (Bacillus halodurans), this protein is Flagellar assembly factor FliW.